A 399-amino-acid polypeptide reads, in one-letter code: Probable peptidoglycan glycosyltransferase FtsW (399 aa).

Over Met-1–Pro-25 the chain is Cytoplasmic. Residues Leu-26–Met-46 form a helical membrane-spanning segment. Topologically, residues Ser-47–Ala-64 are periplasmic. Residues Ile-65–Trp-85 form a helical membrane-spanning segment. Topologically, residues Glu-86–His-88 are cytoplasmic. Residues Gly-89–Gly-109 traverse the membrane as a helical segment. The Periplasmic portion of the chain corresponds to Arg-110–Arg-117. The helical transmembrane segment at Trp-118–Leu-138 threads the bilayer. At Tyr-139–Asn-153 the chain is on the cytoplasmic side. A helical transmembrane segment spans residues Gln-154–Met-174. The Periplasmic portion of the chain corresponds to Gln-175 to Asp-177. The next 2 membrane-spanning stretches (helical) occupy residues Phe-178–Ser-198 and Leu-199–Phe-219. The Periplasmic portion of the chain corresponds to Ser-220–Ser-281. A helical transmembrane segment spans residues Val-282 to Leu-302. At Ser-303–Gln-326 the chain is on the cytoplasmic side. A helical transmembrane segment spans residues Gly-327–Leu-347. Residues Pro-348–Thr-353 are Periplasmic-facing. A helical transmembrane segment spans residues Leu-354–Leu-374. At Leu-375–Ala-399 the chain is on the cytoplasmic side.

The protein belongs to the SEDS family. FtsW subfamily.

It is found in the cell inner membrane. The enzyme catalyses [GlcNAc-(1-&gt;4)-Mur2Ac(oyl-L-Ala-gamma-D-Glu-L-Lys-D-Ala-D-Ala)](n)-di-trans,octa-cis-undecaprenyl diphosphate + beta-D-GlcNAc-(1-&gt;4)-Mur2Ac(oyl-L-Ala-gamma-D-Glu-L-Lys-D-Ala-D-Ala)-di-trans,octa-cis-undecaprenyl diphosphate = [GlcNAc-(1-&gt;4)-Mur2Ac(oyl-L-Ala-gamma-D-Glu-L-Lys-D-Ala-D-Ala)](n+1)-di-trans,octa-cis-undecaprenyl diphosphate + di-trans,octa-cis-undecaprenyl diphosphate + H(+). It functions in the pathway cell wall biogenesis; peptidoglycan biosynthesis. Functionally, peptidoglycan polymerase that is essential for cell division. The polypeptide is Probable peptidoglycan glycosyltransferase FtsW (Allochromatium vinosum (strain ATCC 17899 / DSM 180 / NBRC 103801 / NCIMB 10441 / D) (Chromatium vinosum)).